The sequence spans 114 residues: Adapter SH3BGRL (114 aa).

A required for interaction with HER2 region spans residues 13-50 (SMAIKKKQQDVLGFLEANKIGFEEKDIAANEENRKWMR). The tract at residues 54–71 (PENSRPATGYPLPPQIFN) is required for interaction with PFN1, HER2, and ATG12. Residues 61 to 67 (TGYPLPP) carry the SH3-binding motif.

This sequence belongs to the SH3BGR family. Monomer. Interacts with PFN1/Profilin-1. Interacts with ERBB2. Interacts with ATG12. Interacts with BECN1. Interacts with translating ribosomes.

The protein localises to the cytoplasm. The protein resides in the cytosol. Its subcellular location is the cell membrane. In terms of biological role, appears to function as an adapter protein that bridges proteins together or proteins with mRNAs. May function as a ubiquitin ligase-substrate adapter. Additionally, associates with translating cytoplasmic ribosomes and may promote the expression of specific mRNAs. This is Adapter SH3BGRL (SH3BGRL) from Bos taurus (Bovine).